Consider the following 311-residue polypeptide: tRNA dimethylallyltransferase (311 aa).

An ATP-binding site is contributed by 12 to 19 (GPTASGKT). Residue 14–19 (TASGKT) coordinates substrate. 3 interaction with substrate tRNA regions span residues 37-40 (DSAL), 161-165 (QRINR), and 241-246 (RCVGYR).

Belongs to the IPP transferase family. As to quaternary structure, monomer. It depends on Mg(2+) as a cofactor.

It catalyses the reaction adenosine(37) in tRNA + dimethylallyl diphosphate = N(6)-dimethylallyladenosine(37) in tRNA + diphosphate. Functionally, catalyzes the transfer of a dimethylallyl group onto the adenine at position 37 in tRNAs that read codons beginning with uridine, leading to the formation of N6-(dimethylallyl)adenosine (i(6)A). This Histophilus somni (strain 129Pt) (Haemophilus somnus) protein is tRNA dimethylallyltransferase.